We begin with the raw amino-acid sequence, 381 residues long: Putative F-box/kelch-repeat protein At3g17570 (381 aa).

The F-box domain maps to 1–45 (MFTDLPRDLETEILSRVPATSLQKLKPTCKRWYTLFKDPEFLKKH). 3 Kelch repeats span residues 151–199 (SYKI…TLKG), 229–281 (LLYQ…KIVE), and 331–379 (RFYI…GGKR).

This Arabidopsis thaliana (Mouse-ear cress) protein is Putative F-box/kelch-repeat protein At3g17570.